A 442-amino-acid chain; its full sequence is Histidine--tRNA ligase (442 aa).

This sequence belongs to the class-II aminoacyl-tRNA synthetase family. In terms of assembly, homodimer.

It localises to the cytoplasm. It catalyses the reaction tRNA(His) + L-histidine + ATP = L-histidyl-tRNA(His) + AMP + diphosphate + H(+). The polypeptide is Histidine--tRNA ligase (Helicobacter pylori (strain P12)).